Here is a 207-residue protein sequence, read N- to C-terminus: MSYQENNAMPSIMDALVPMVVEQTSRGERSYDIYSRLLKERVIFLTGQVEDHMANLVVAQLLFLESENPDKDIFLYINSPGGSVTAGMSIYDTMQFIKPNVSTVCMGQACSMGAFLLAGGAPGKRYVLPNSRVMIHQPLGGFQGQASDIQIHAQEILTIKKKLNTLLAEHTGQPLEVIEQDTDRDNFMSADDAVKYGLVDAVLNKRD.

Ser111 (nucleophile) is an active-site residue. The active site involves His136.

The protein belongs to the peptidase S14 family. Fourteen ClpP subunits assemble into 2 heptameric rings which stack back to back to give a disk-like structure with a central cavity, resembling the structure of eukaryotic proteasomes.

Its subcellular location is the cytoplasm. It carries out the reaction Hydrolysis of proteins to small peptides in the presence of ATP and magnesium. alpha-casein is the usual test substrate. In the absence of ATP, only oligopeptides shorter than five residues are hydrolyzed (such as succinyl-Leu-Tyr-|-NHMec, and Leu-Tyr-Leu-|-Tyr-Trp, in which cleavage of the -Tyr-|-Leu- and -Tyr-|-Trp bonds also occurs).. Its function is as follows. Cleaves peptides in various proteins in a process that requires ATP hydrolysis. Has a chymotrypsin-like activity. Plays a major role in the degradation of misfolded proteins. This chain is ATP-dependent Clp protease proteolytic subunit, found in Aliivibrio fischeri (strain ATCC 700601 / ES114) (Vibrio fischeri).